The sequence spans 137 residues: Neutral phospholipase A2 ammodytin I2 (137 aa).

A signal peptide spans 1–16 (MRTLWIVAVCLIGVEG). 7 cysteine pairs are disulfide-bonded: cysteine 42-cysteine 131, cysteine 44-cysteine 60, cysteine 59-cysteine 111, cysteine 65-cysteine 137, cysteine 66-cysteine 104, cysteine 73-cysteine 97, and cysteine 91-cysteine 102. Residues tyrosine 43, glycine 45, and glycine 47 each contribute to the Ca(2+) site. Histidine 63 is a catalytic residue. A Ca(2+)-binding site is contributed by aspartate 64. Residue aspartate 105 is part of the active site.

Belongs to the phospholipase A2 family. Group II subfamily. D49 sub-subfamily. Ca(2+) is required as a cofactor. Expressed by the venom gland.

It is found in the secreted. It catalyses the reaction a 1,2-diacyl-sn-glycero-3-phosphocholine + H2O = a 1-acyl-sn-glycero-3-phosphocholine + a fatty acid + H(+). Snake venom phospholipase A2 (PLA2) that has enzymatic activity but is non-toxic. Displays low binding affinity and enzymatic activity on phosphatidylserine-containing vesicles and HEK-293 plasma membranes, in contrast to ammodytoxins that have high activity on these phospholipids. PLA2 catalyzes the calcium-dependent hydrolysis of the 2-acyl groups in 3-sn-phosphoglycerides. This chain is Neutral phospholipase A2 ammodytin I2, found in Vipera ammodytes ammodytes (Western sand viper).